A 312-amino-acid chain; its full sequence is 1-(5-phosphoribosyl)-5-[(5-phosphoribosylamino)methylideneamino] imidazole-4-carboxamide isomerase HISN3, chloroplastic (312 aa).

The N-terminal 67 residues, 1 to 67 (MRSPASTPSI…IHKGKVKQIV (67 aa)), are a transit peptide targeting the chloroplast. Residue aspartate 57 participates in 1-(5-phospho-beta-D-ribosyl)-5-[(5-phospho-beta-D-ribosylamino)methylideneamino]imidazole-4-carboxamide binding. A 5-[(5-phospho-1-deoxy-D-ribulos-1-ylimino)methylamino]-1-(5-phospho-beta-D-ribosyl)imidazole-4-carboxamide-binding site is contributed by glutamine 65. Glutamine 65 and isoleucine 66 together coordinate Na(+). Glycine 68 is a binding site for 1-(5-phospho-beta-D-ribosyl)-5-[(5-phospho-beta-D-ribosylamino)methylideneamino]imidazole-4-carboxamide. The 5-[(5-phospho-1-deoxy-D-ribulos-1-ylimino)methylamino]-1-(5-phospho-beta-D-ribosyl)imidazole-4-carboxamide site is built by histidine 108, glycine 138, threonine 158, and serine 159. 3 residues coordinate 1-(5-phospho-beta-D-ribosyl)-5-[(5-phospho-beta-D-ribosylamino)methylideneamino]imidazole-4-carboxamide: glycine 138, threonine 158, and serine 159. Serine 159 and phenylalanine 162 together coordinate Na(+). 1-(5-phospho-beta-D-ribosyl)-5-[(5-phospho-beta-D-ribosylamino)methylideneamino]imidazole-4-carboxamide contacts are provided by aspartate 187, arginine 203, tryptophan 204, and histidine 230. Residue aspartate 187 coordinates 5-[(5-phospho-1-deoxy-D-ribulos-1-ylimino)methylamino]-1-(5-phospho-beta-D-ribosyl)imidazole-4-carboxamide. 5-[(5-phospho-1-deoxy-D-ribulos-1-ylimino)methylamino]-1-(5-phospho-beta-D-ribosyl)imidazole-4-carboxamide is bound at residue tryptophan 204. Glutamate 235 serves as a coordination point for Na(+). 4 residues coordinate 1-(5-phospho-beta-D-ribosyl)-5-[(5-phospho-beta-D-ribosylamino)methylideneamino]imidazole-4-carboxamide: glycine 236, glycine 262, glycine 285, and serine 286. 5-[(5-phospho-1-deoxy-D-ribulos-1-ylimino)methylamino]-1-(5-phospho-beta-D-ribosyl)imidazole-4-carboxamide-binding residues include glycine 236, glycine 262, glycine 285, and serine 286.

Belongs to the HisA/HisF family. Na(+) is required as a cofactor.

It is found in the plastid. The protein resides in the chloroplast. The catalysed reaction is 1-(5-phospho-beta-D-ribosyl)-5-[(5-phospho-beta-D-ribosylamino)methylideneamino]imidazole-4-carboxamide = 5-[(5-phospho-1-deoxy-D-ribulos-1-ylimino)methylamino]-1-(5-phospho-beta-D-ribosyl)imidazole-4-carboxamide. It functions in the pathway amino-acid biosynthesis; L-histidine biosynthesis; L-histidine from 5-phospho-alpha-D-ribose 1-diphosphate: step 4/9. Functionally, component of the histidine biosynthesis pathway that catalyzes the isomerization of 5'-ProFAR (pro-phosphoribosyl formimino-5-aminoimidazole-4-carboxamide ribonucleotide, referred as 1-(5-phospho-beta-D-ribosyl)-5-[(5-phospho-beta-D-ribosylamino)methylideneamino]imidazole-4-carboxamide) to PrFAR (phosphoribulosyl formimino-5-aminoimidazole-4-carboxamide ribonucleotide, referred as 5-[(5-phospho-1-deoxy-D-ribulos-1-ylimino)methylamino]-1-(5-phospho-beta-D-ribosyl)imidazole-4-carboxamide). The protein is 1-(5-phosphoribosyl)-5-[(5-phosphoribosylamino)methylideneamino] imidazole-4-carboxamide isomerase HISN3, chloroplastic of Medicago truncatula (Barrel medic).